The following is a 121-amino-acid chain: Small ribosomal subunit protein uS13 (121 aa).

Residues M89–K121 form a disordered region.

The protein belongs to the universal ribosomal protein uS13 family. As to quaternary structure, part of the 30S ribosomal subunit. Forms a loose heterodimer with protein S19. Forms two bridges to the 50S subunit in the 70S ribosome.

Its function is as follows. Located at the top of the head of the 30S subunit, it contacts several helices of the 16S rRNA. In the 70S ribosome it contacts the 23S rRNA (bridge B1a) and protein L5 of the 50S subunit (bridge B1b), connecting the 2 subunits; these bridges are implicated in subunit movement. Contacts the tRNAs in the A and P-sites. The sequence is that of Small ribosomal subunit protein uS13 from Levilactobacillus brevis (strain ATCC 367 / BCRC 12310 / CIP 105137 / JCM 1170 / LMG 11437 / NCIMB 947 / NCTC 947) (Lactobacillus brevis).